Here is a 161-residue protein sequence, read N- to C-terminus: Allophycocyanin alpha-B chain (161 aa).

Residue Asn71 is modified to N4-methylasparagine. Cys81 contacts (2R,3E)-phycocyanobilin.

The protein belongs to the phycobiliprotein family. Contains one covalently linked bilin chromophore.

It localises to the plastid. It is found in the chloroplast thylakoid membrane. Its function is as follows. Allophycocyanin is a photosynthetic bile pigment-protein complex with maximum absorption at approximately 650 nanometers. This Porphyra purpurea (Red seaweed) protein is Allophycocyanin alpha-B chain (apcD).